Here is a 422-residue protein sequence, read N- to C-terminus: m7GpppN-mRNA hydrolase (422 aa).

Residues 95–226 form the Nudix hydrolase domain; sequence MGVPTYGAII…KLGLAPNKFF (132 aa). The short motif at 129 to 150 is the Nudix box element; sequence GKVNKEEAPHDCAAREVFEETG. Residues E144 and E148 each coordinate Mn(2+). Phosphoserine is present on residues S246, S247, S249, S276, and S284. The segment at 247-347 is disordered; it reads SDSDNGFSSA…GVHGQPAKQQ (101 aa). A compositionally biased stretch (low complexity) spans 249–258; the sequence is SDNGFSSAGS. Residues 303 to 312 are compositionally biased toward basic and acidic residues; the sequence is NHGEVSDLLK.

Belongs to the Nudix hydrolase family. DCP2 subfamily. As to quaternary structure, found in a mRNA decay complex with LSM1, LSM3, LSM4, EXOSC2, EXOSC4, EXOSC10, PARN, XRN1, CNOT6, UPF1, UPF2 and UPF3B. Forms a complex with DCP1A, EDC3, DDX6 and EDC4/HEDLS, within this complex directly interacts with EDC4/HEDLS. Interacts with DPC1B, UPF1, UPF2 and UPF3B. Associates with polysomes. Interacts (via N-terminus and C-terminus) with TRIM21 (via N-terminus and C-terminus). Interacts with LIMD1, WTIP and AJUBA. Interacts with DDX17 in an RNA-dependent manner. Interacts with ZC3HAV1. Interacts with APOBEC3G in an RNA-dependent manner. Interacts with ZFP36L1 (via N-terminus). Interacts with NBDY. Requires Mn(2+) as cofactor. Mg(2+) is required as a cofactor. In terms of tissue distribution, strongly expressed in brain and testis. Weakly expressed in lung. Not detected in heart, liver, kidney and muscle (at protein level).

The protein localises to the cytoplasm. The protein resides in the P-body. It is found in the nucleus. The catalysed reaction is a 5'-end (N(7)-methyl 5'-triphosphoguanosine)-ribonucleoside in mRNA + H2O = N(7)-methyl-GDP + a 5'-end phospho-ribonucleoside in mRNA + 2 H(+). Its function is as follows. Decapping metalloenzyme that catalyzes the cleavage of the cap structure on mRNAs. Removes the 7-methyl guanine cap structure from mRNA molecules, yielding a 5'-phosphorylated mRNA fragment and 7m-GDP. Necessary for the degradation of mRNAs, both in normal mRNA turnover and in nonsense-mediated mRNA decay. Plays a role in replication-dependent histone mRNA degradation. Has higher activity towards mRNAs that lack a poly(A) tail. Has no activity towards a cap structure lacking an RNA moiety. The presence of a N(6)-methyladenosine methylation at the second transcribed position of mRNAs (N(6),2'-O-dimethyladenosine cap; m6A(m)) provides resistance to DCP2-mediated decapping. Blocks autophagy in nutrient-rich conditions by repressing the expression of ATG-related genes through degradation of their transcripts. The polypeptide is m7GpppN-mRNA hydrolase (Dcp2) (Mus musculus (Mouse)).